The chain runs to 307 residues: 2-carboxy-1,4-naphthoquinone phytyltransferase (307 aa).

8 helical membrane passes run methionine 27–glycine 47, glycine 51–serine 71, leucine 98–serine 118, threonine 125–phenylalanine 145, leucine 147–alanine 167, phenylalanine 177–phenylalanine 197, leucine 223–valine 243, and phenylalanine 284–alanine 304.

It belongs to the MenA family. Type 2 subfamily.

The protein localises to the cell inner membrane. It catalyses the reaction 2-carboxy-1,4-naphthoquinone + phytyl diphosphate + H(+) = demethylphylloquinone + CO2 + diphosphate. The protein operates within cofactor biosynthesis; phylloquinone biosynthesis. In terms of biological role, involved in the synthesis of phylloquinone (vitamin K1). Catalyzes the transfer of a prenyl chain to 2-carboxy-1,4-naphthoquinone. The sequence is that of 2-carboxy-1,4-naphthoquinone phytyltransferase from Synechocystis sp. (strain ATCC 27184 / PCC 6803 / Kazusa).